Consider the following 907-residue polypeptide: Translation initiation factor IF-2 (907 aa).

A disordered region spans residues 26–317 (DAGMKKSSSD…KPKSMQHGFD (292 aa)). Basic and acidic residues-rich tracts occupy residues 28-44 (GMKK…EKQK) and 101-248 (SAIE…DTDY). A compositionally biased stretch (basic residues) spans 299–308 (KGGRKGKLSK). The 170-residue stretch at 406 to 575 (PRAPVVTIMG…LLQAEVLELT (170 aa)) folds into the tr-type G domain. The segment at 415 to 422 (GHVDHGKT) is G1. 415 to 422 (GHVDHGKT) is a GTP binding site. The interval 440–444 (GITQH) is G2. Residues 461 to 464 (DTPG) are G3. GTP-binding positions include 461–465 (DTPGH) and 515–518 (NKID). Residues 515–518 (NKID) form a G4 region. Residues 551 to 553 (SAK) form a G5 region.

Belongs to the TRAFAC class translation factor GTPase superfamily. Classic translation factor GTPase family. IF-2 subfamily.

The protein resides in the cytoplasm. In terms of biological role, one of the essential components for the initiation of protein synthesis. Protects formylmethionyl-tRNA from spontaneous hydrolysis and promotes its binding to the 30S ribosomal subunits. Also involved in the hydrolysis of GTP during the formation of the 70S ribosomal complex. The chain is Translation initiation factor IF-2 from Vibrio vulnificus (strain YJ016).